The chain runs to 601 residues: Elongation factor 4 (601 aa).

The region spanning 8–189 (EQIRNFGIIA…LIVRKAPPPK (182 aa)) is the tr-type G domain. GTP is bound at residue 20-25 (DHGKST).

This sequence belongs to the TRAFAC class translation factor GTPase superfamily. Classic translation factor GTPase family. LepA subfamily.

The protein resides in the cell membrane. It catalyses the reaction GTP + H2O = GDP + phosphate + H(+). Required for accurate and efficient protein synthesis under certain stress conditions. May act as a fidelity factor of the translation reaction, by catalyzing a one-codon backward translocation of tRNAs on improperly translocated ribosomes. Back-translocation proceeds from a post-translocation (POST) complex to a pre-translocation (PRE) complex, thus giving elongation factor G a second chance to translocate the tRNAs correctly. Binds to ribosomes in a GTP-dependent manner. In Tropheryma whipplei (strain Twist) (Whipple's bacillus), this protein is Elongation factor 4.